The following is a 303-amino-acid chain: Putative S-adenosyl-L-methionine-dependent methyltransferase MAB_0213c (303 aa).

S-adenosyl-L-methionine-binding positions include Asp126 and 155-156 (DL).

Belongs to the UPF0677 family.

In terms of biological role, exhibits S-adenosyl-L-methionine-dependent methyltransferase activity. The sequence is that of Putative S-adenosyl-L-methionine-dependent methyltransferase MAB_0213c from Mycobacteroides abscessus (strain ATCC 19977 / DSM 44196 / CCUG 20993 / CIP 104536 / JCM 13569 / NCTC 13031 / TMC 1543 / L948) (Mycobacterium abscessus).